A 248-amino-acid polypeptide reads, in one-letter code: 3,4-dihydroxyphthalate decarboxylase (248 aa).

Glu90 (proton donor/acceptor) is an active-site residue. A divalent metal cation contacts are provided by Glu90, His109, His111, and His177.

Belongs to the aldolase class II family. A divalent metal cation serves as cofactor.

It carries out the reaction 3,4-dihydroxyphthalate + H(+) = 3,4-dihydroxybenzoate + CO2. It functions in the pathway xenobiotic degradation; phthalate degradation. Catalyzes the decarboxylation of 3,4-dihydroxyphthalate to protocatechuate (3,4-dihydroxybenzoate) during phthalate metabolism. This chain is 3,4-dihydroxyphthalate decarboxylase, found in Arthrobacter keyseri.